Consider the following 317-residue polypeptide: Transcription initiation factor IIB 3 (317 aa).

Residues 1 to 14 show a composition bias toward basic and acidic residues; sequence MERATREREKEQRE. Positions 1 to 25 are disordered; that stretch reads MERATREREKEQREQAQTNDEAQQC. A TFIIB-type zinc finger spans residues 21–50; it reads EAQQCPECNSANVITDQSERVCEDCGLVLE. Zn(2+) is bound by residues Cys-25, Cys-28, Cys-42, and Cys-45. The segment at 62-83 is disordered; sequence AFNSSERDQKSRVGAPTTKTMH. Tandem repeats lie at residues 136–219 and 230–311.

Belongs to the TFIIB family.

Its function is as follows. Stabilizes TBP binding to an archaeal box-A promoter. Also responsible for recruiting RNA polymerase II to the pre-initiation complex (DNA-TBP-TFIIB). This Halobacterium salinarum (strain ATCC 700922 / JCM 11081 / NRC-1) (Halobacterium halobium) protein is Transcription initiation factor IIB 3.